The primary structure comprises 184 residues: Phosphonoformate cytidylyltransferase (184 aa).

The enzyme catalyses phosphonoformate + CTP = CMP-5'-phosphonoformate + diphosphate. The protein operates within secondary metabolite biosynthesis; bialaphos biosynthesis. Its function is as follows. Catalyzes the displacement of the beta- and gamma-phosphates of CTP by phosphonoformate to produce CMP-5'-phosphonoformate, an intermediate in the biosynthesis of phosphinothricin tripeptide (PTT), also known as bialaphos (BA), a natural-product antibiotic and potent herbicide. The chain is Phosphonoformate cytidylyltransferase from Streptomyces viridochromogenes (strain DSM 40736 / JCM 4977 / BCRC 1201 / Tue 494).